We begin with the raw amino-acid sequence, 199 residues long: 7-methyl-GTP pyrophosphatase (199 aa).

The Proton acceptor role is filled by D74.

Belongs to the Maf family. YceF subfamily. The cofactor is a divalent metal cation.

Its subcellular location is the cytoplasm. The enzyme catalyses N(7)-methyl-GTP + H2O = N(7)-methyl-GMP + diphosphate + H(+). In terms of biological role, nucleoside triphosphate pyrophosphatase that hydrolyzes 7-methyl-GTP (m(7)GTP). May have a dual role in cell division arrest and in preventing the incorporation of modified nucleotides into cellular nucleic acids. This chain is 7-methyl-GTP pyrophosphatase, found in Albidiferax ferrireducens (strain ATCC BAA-621 / DSM 15236 / T118) (Rhodoferax ferrireducens).